A 463-amino-acid polypeptide reads, in one-letter code: Type II NADH:quinone oxidoreductase Ndh (463 aa).

Residues 21 to 25 and valine 89 contribute to the FAD site; that span reads GSGFG. The active site involves glutamate 184. Residues aspartate 322 and 333–334 contribute to the FAD site; that span reads AQ. A helical transmembrane segment spans residues 387–407; sequence FSGFIAWLIWLVLHLAYLIGF.

The protein belongs to the NADH dehydrogenase family. It depends on FAD as a cofactor.

It localises to the cell inner membrane. The catalysed reaction is a quinone + NADH + H(+) = a quinol + NAD(+). It carries out the reaction a menaquinone + NADH + H(+) = a menaquinol + NAD(+). The enzyme catalyses a ubiquinone + NADH + H(+) = a ubiquinol + NAD(+). Inhibited by phenothiazine analogs. Inhibited by 2-mercapto-quinazolinones. Not inhibited by classic inhibitors of type I NADH dehydrogenase, such as rotenone, piericidin A and pyridaben. Its function is as follows. Alternative, nonproton pumping NADH:quinone oxidoreductase that delivers electrons to the respiratory chain by oxidation of NADH and reduction of quinones. Ndh is probably the main NADH dehydrogenase of M.tuberculosis. The polypeptide is Type II NADH:quinone oxidoreductase Ndh (Mycobacterium tuberculosis (strain ATCC 25618 / H37Rv)).